We begin with the raw amino-acid sequence, 71 residues long: uncharacterized protein (71 aa).

A Sm domain is found at 15-71 (PNFEYARRLNGKKVKIFLRNGEVLDAEVTGVSNYEIMVKVGDRNLLVFKHAIDYIEY).

This is an uncharacterized protein from Methanocaldococcus jannaschii (strain ATCC 43067 / DSM 2661 / JAL-1 / JCM 10045 / NBRC 100440) (Methanococcus jannaschii).